The following is a 90-amino-acid chain: Putative defensin-like protein 64 (90 aa).

A signal peptide spans 1 to 23 (MWGRQIVLKIFFLVLSCVIVIET). Intrachain disulfides connect C33/C56 and C42/C77.

It belongs to the DEFL family.

The protein localises to the secreted. This Arabidopsis thaliana (Mouse-ear cress) protein is Putative defensin-like protein 64.